The sequence spans 386 residues: F420 non-reducing hydrogenase I small subunit (386 aa).

The tat-type signal signal peptide spans 1–51 (MVEMSTGTTNLVRTLDSMDFLKMDRRTFMKAVSALGATAFLGTYQTEIVNA). Residues Cys67, Cys70, Cys178, Cys227, His273, Cys276, Cys296, and Cys302 each contribute to the [4Fe-4S] cluster site. [3Fe-4S] cluster contacts are provided by Cys311, Cys330, and Cys333.

This sequence belongs to the [NiFe]/[NiFeSe] hydrogenase small subunit family. As to quaternary structure, composed of a large subunit (VhoA), a small subunit (VhoG) and a cytochrome subunit (VhoC). It depends on [4Fe-4S] cluster as a cofactor. [3Fe-4S] cluster is required as a cofactor. Predicted to be exported by the Tat system. The position of the signal peptide cleavage has not been experimentally proven.

The protein resides in the cell membrane. It catalyses the reaction methanophenazine + H2 = dihydromethanophenazine. Part of the F420 non-reducing hydrogenase I complex that catalyzes the reduction of methanophenazine to dihydromethanophenazine. This Methanosarcina mazei (strain ATCC BAA-159 / DSM 3647 / Goe1 / Go1 / JCM 11833 / OCM 88) (Methanosarcina frisia) protein is F420 non-reducing hydrogenase I small subunit.